The sequence spans 214 residues: Triosephosphate isomerase (214 aa).

Residue 6-8 participates in substrate binding; the sequence is NLK. The active-site Electrophile is the His-85. Catalysis depends on Glu-133, which acts as the Proton acceptor. Substrate is bound by residues Ile-138, Gly-173, and 194-195; that span reads AS.

This sequence belongs to the triosephosphate isomerase family. Homotetramer; dimer of dimers.

The protein localises to the cytoplasm. It catalyses the reaction D-glyceraldehyde 3-phosphate = dihydroxyacetone phosphate. The protein operates within carbohydrate biosynthesis; gluconeogenesis. It functions in the pathway carbohydrate degradation; glycolysis; D-glyceraldehyde 3-phosphate from glycerone phosphate: step 1/1. Its function is as follows. Involved in the gluconeogenesis. Catalyzes stereospecifically the conversion of dihydroxyacetone phosphate (DHAP) to D-glyceraldehyde-3-phosphate (G3P). The polypeptide is Triosephosphate isomerase (Halobacterium salinarum (strain ATCC 700922 / JCM 11081 / NRC-1) (Halobacterium halobium)).